The primary structure comprises 345 residues: NADPH dehydrogenase (345 aa).

23 to 26 (SPMC) is an FMN binding site. Residue tyrosine 28 participates in substrate binding. Alanine 60 and glutamine 102 together coordinate FMN. A substrate-binding site is contributed by 164-167 (HGAH). FMN contacts are provided by residues arginine 215 and 307–308 (GR).

Belongs to the NADH:flavin oxidoreductase/NADH oxidase family. NamA subfamily. In terms of assembly, homotetramer. Requires FMN as cofactor.

The enzyme catalyses A + NADPH + H(+) = AH2 + NADP(+). Catalyzes the reduction of the double bond of an array of alpha,beta-unsaturated aldehydes and ketones. It also reduces the nitro group of nitroester and nitroaromatic compounds. It could have a role in detoxification processes. The sequence is that of NADPH dehydrogenase from Bacillus thuringiensis subsp. konkukian (strain 97-27).